The sequence spans 125 residues: Probable 4-amino-4-deoxy-L-arabinose-phosphoundecaprenol flippase subunit ArnF (125 aa).

Topologically, residues 1–2 are cytoplasmic; the sequence is MG. A helical membrane pass occupies residues 3 to 23; it reads VMWGLISVAIASLAQLSLGFA. The Periplasmic portion of the chain corresponds to 24 to 33; sequence MMRLPSIAHP. A helical membrane pass occupies residues 34–54; sequence LAFISGLGALNAATLALFAGL. At 55 to 76 the chain is on the cytoplasmic side; the sequence is AGYLVSVFCWHKTLHTLALSKA. A helical membrane pass occupies residues 77–97; the sequence is YALLSLSYVLVWVASMLLPGL. Topologically, residues 98–100 are periplasmic; the sequence is QGA. The chain crosses the membrane as a helical span at residues 101–121; that stretch reads FSLKAMLGVLCIMAGVMLIFL. Residues 122–125 lie on the Cytoplasmic side of the membrane; it reads PARS.

Belongs to the ArnF family. Heterodimer of ArnE and ArnF.

Its subcellular location is the cell inner membrane. The protein operates within bacterial outer membrane biogenesis; lipopolysaccharide biosynthesis. Functionally, translocates 4-amino-4-deoxy-L-arabinose-phosphoundecaprenol (alpha-L-Ara4N-phosphoundecaprenol) from the cytoplasmic to the periplasmic side of the inner membrane. The sequence is that of Probable 4-amino-4-deoxy-L-arabinose-phosphoundecaprenol flippase subunit ArnF from Salmonella agona (strain SL483).